Reading from the N-terminus, the 400-residue chain is Acetate kinase (400 aa).

A Mg(2+)-binding site is contributed by asparagine 7. An ATP-binding site is contributed by lysine 14. Arginine 91 provides a ligand contact to substrate. Aspartate 148 acts as the Proton donor/acceptor in catalysis. ATP-binding positions include 208-212 (HLGNG), 284-286 (DMR), and 332-336 (GVGEN). Glutamate 384 provides a ligand contact to Mg(2+).

The protein belongs to the acetokinase family. In terms of assembly, homodimer. The cofactor is Mg(2+). Requires Mn(2+) as cofactor.

The protein localises to the cytoplasm. The catalysed reaction is acetate + ATP = acetyl phosphate + ADP. It participates in metabolic intermediate biosynthesis; acetyl-CoA biosynthesis; acetyl-CoA from acetate: step 1/2. Functionally, catalyzes the formation of acetyl phosphate from acetate and ATP. Can also catalyze the reverse reaction. The chain is Acetate kinase from Coprothermobacter proteolyticus (strain ATCC 35245 / DSM 5265 / OCM 4 / BT).